Consider the following 710-residue polypeptide: Chaperonin-containing T-complex member BBS12 (710 aa).

It belongs to the TCP-1 chaperonin family. BBS12 subfamily. In terms of assembly, component of the chaperonin-containing T-complex (TRiC), a heterooligomeric complex of about 850 to 900 kDa that forms two stacked rings, 12 to 16 nm in diameter. Interacts with MKKS.

The protein localises to the cell projection. It localises to the cilium. Its function is as follows. Component of the chaperonin-containing T-complex (TRiC), a molecular chaperone complex that assists the folding of proteins upon ATP hydrolysis. As part of the TRiC complex may play a role in the assembly of BBSome, a complex involved in ciliogenesis regulating transports vesicles to the cilia. Involved in adipogenic differentiation. The sequence is that of Chaperonin-containing T-complex member BBS12 (BBS12) from Homo sapiens (Human).